The chain runs to 46 residues: Viscotoxin-C1 (46 aa).

Intrachain disulfides connect cysteine 3–cysteine 40, cysteine 4–cysteine 32, and cysteine 16–cysteine 26.

In terms of assembly, monomer.

It localises to the secreted. In terms of biological role, thionins are small plant proteins which are toxic to animal cells. They seem to exert their toxic effect at the level of the cell membrane. Their precise function is not known. The chain is Viscotoxin-C1 from Viscum album (European mistletoe).